A 428-amino-acid chain; its full sequence is GTPase Obg (428 aa).

The 158-residue stretch at 1-158 (MFVDQVKIYV…RDVILELKVL (158 aa)) folds into the Obg domain. One can recognise an OBG-type G domain in the interval 159 to 329 (ADVGLVGFPS…LLFEVANLIE (171 aa)). GTP-binding positions include 165 to 172 (GFPSVGKS), 190 to 194 (FTTIV), 212 to 215 (DLPG), 282 to 285 (NKMD), and 310 to 312 (SAV). Residues Ser172 and Thr192 each coordinate Mg(2+). The 79-residue stretch at 350–428 (KFDTEGVKFE…ILEYEFEFID (79 aa)) folds into the OCT domain.

This sequence belongs to the TRAFAC class OBG-HflX-like GTPase superfamily. OBG GTPase family. Monomer. The cofactor is Mg(2+).

Its subcellular location is the cytoplasm. Its function is as follows. An essential GTPase which binds GTP, GDP and possibly (p)ppGpp with moderate affinity, with high nucleotide exchange rates and a fairly low GTP hydrolysis rate. Plays a role in control of the cell cycle, stress response, ribosome biogenesis and in those bacteria that undergo differentiation, in morphogenesis control. The protein is GTPase Obg of Bacillus cereus (strain ATCC 14579 / DSM 31 / CCUG 7414 / JCM 2152 / NBRC 15305 / NCIMB 9373 / NCTC 2599 / NRRL B-3711).